The following is a 688-amino-acid chain: Lectin-domain containing receptor kinase VI.3 (688 aa).

Positions 1-14 (MLVLFLLLTIPTRA) are cleaved as a signal peptide. Topologically, residues 15–306 (QRTTTETPKT…KRGYNSQVLA (292 aa)) are extracellular. The interval 22–271 (PKTEFIFRGF…AHYVMGWSFS (250 aa)) is legume-lectin like. The chain crosses the membrane as a helical span at residues 307–327 (LIVALSGVTVILLALLFFFVM). The Cytoplasmic portion of the chain corresponds to 328 to 688 (YKKRLQQGEV…VSSSSVISGR (361 aa)). Residues 361–640 (FKENRIVGTG…LNGDDDVPEI (280 aa)) enclose the Protein kinase domain. ATP-binding positions include 367–375 (VGTGGFGTV) and lysine 391. Aspartate 490 serves as the catalytic Proton acceptor. The disordered stretch occupies residues 662–688 (VSSDRASSSVPSFSVTRVSSSSVISGR).

In the C-terminal section; belongs to the protein kinase superfamily. Ser/Thr protein kinase family. The protein in the N-terminal section; belongs to the leguminous lectin family.

The protein resides in the cell membrane. The catalysed reaction is L-seryl-[protein] + ATP = O-phospho-L-seryl-[protein] + ADP + H(+). The enzyme catalyses L-threonyl-[protein] + ATP = O-phospho-L-threonyl-[protein] + ADP + H(+). Functionally, involved in negative regulation of abscisic acid response in seed germination. This Arabidopsis thaliana (Mouse-ear cress) protein is Lectin-domain containing receptor kinase VI.3 (LECRK63).